Reading from the N-terminus, the 352-residue chain is MKIAVLPGDGIGPEVTREAVRVIEALGLGDIEMKEAPVGGAAYKAYGHPLPPETLEIARLSDGILFGAVGDPDCDSLERHLRPEQAILGLRKALTLFANLRPARVFKGMEDFSALRPEVAGAIDLLIVRELNGDVYFGEKGFRTAANGDREGYDVMSYSESEVRRIAHVAFRAAMGRKKRLCSVDKANVLETSQLWRDVMLEVAKDYPEVALEHMYVDNAAMQLVRAPGNFDVVVTGNLFGDILSDQASMCVGSIGLLASASLGERETEYGTFGLYEPIHGSAPDIAGKGLANPMATILSAAMLLRHSLGLEVAADRIEAAVAKALADGVLGRDLGGTAGTTEIGDAVLARL.

Residues R91, R101, R129, and D218 each coordinate substrate. Residues D218, D242, and D246 each contribute to the Mg(2+) site. 281–293 serves as a coordination point for NAD(+); that stretch reads GSAPDIAGKGLAN.

Belongs to the isocitrate and isopropylmalate dehydrogenases family. LeuB type 1 subfamily. As to quaternary structure, homodimer. It depends on Mg(2+) as a cofactor. Mn(2+) is required as a cofactor.

It is found in the cytoplasm. It catalyses the reaction (2R,3S)-3-isopropylmalate + NAD(+) = 4-methyl-2-oxopentanoate + CO2 + NADH. Its pathway is amino-acid biosynthesis; L-leucine biosynthesis; L-leucine from 3-methyl-2-oxobutanoate: step 3/4. In terms of biological role, catalyzes the oxidation of 3-carboxy-2-hydroxy-4-methylpentanoate (3-isopropylmalate) to 3-carboxy-4-methyl-2-oxopentanoate. The product decarboxylates to 4-methyl-2 oxopentanoate. This Novosphingobium aromaticivorans (strain ATCC 700278 / DSM 12444 / CCUG 56034 / CIP 105152 / NBRC 16084 / F199) protein is 3-isopropylmalate dehydrogenase.